The sequence spans 121 residues: Large ribosomal subunit protein uL24 (121 aa).

The segment at M1 to A30 is disordered.

The protein belongs to the universal ribosomal protein uL24 family. As to quaternary structure, part of the 50S ribosomal subunit.

Its function is as follows. One of two assembly initiator proteins, it binds directly to the 5'-end of the 23S rRNA, where it nucleates assembly of the 50S subunit. In terms of biological role, located at the polypeptide exit tunnel on the outside of the subunit. The sequence is that of Large ribosomal subunit protein uL24 from Methanoculleus marisnigri (strain ATCC 35101 / DSM 1498 / JR1).